A 206-amino-acid polypeptide reads, in one-letter code: 2,3-bisphosphoglycerate-dependent phosphoglycerate mutase (206 aa).

Substrate contacts are provided by residues 9-16, 22-23, Arg-61, 88-91, Lys-99, 115-116, and 159-160; these read RHGQSEWN, TG, ERDY, RR, and GN. The active-site Tele-phosphohistidine intermediate is His-10. The Proton donor/acceptor role is filled by Glu-88.

This sequence belongs to the phosphoglycerate mutase family. BPG-dependent PGAM subfamily. In terms of assembly, homodimer.

The catalysed reaction is (2R)-2-phosphoglycerate = (2R)-3-phosphoglycerate. It participates in carbohydrate degradation; glycolysis; pyruvate from D-glyceraldehyde 3-phosphate: step 3/5. Catalyzes the interconversion of 2-phosphoglycerate and 3-phosphoglycerate. The sequence is that of 2,3-bisphosphoglycerate-dependent phosphoglycerate mutase from Bartonella bacilliformis (strain ATCC 35685 / KC583 / Herrer 020/F12,63).